Reading from the N-terminus, the 541-residue chain is Paromamine 6'-oxidase (541 aa).

A disordered region spans residues 1–29; sequence MKRLRGTLPSDARHAWHPEPLGPAHRDGW. H470 serves as the catalytic Proton acceptor.

It belongs to the GMC oxidoreductase family. FAD serves as cofactor.

The catalysed reaction is 6'''-deamino-6'''-hydroxyneomycin C + O2 = 6'''-deamino-6'''-oxoneomycin C + H2O2. It carries out the reaction paromamine + O2 = 6'-oxoparomamine + H2O2. It functions in the pathway antibiotic biosynthesis; neomycin biosynthesis. In terms of biological role, glucosaminyl-6'-oxidase involved in the biosynthetic pathway of neomycin by mediating FAD-dependent dehydrogenation of paromamine to 6'-dehydro-6'-oxoparomamine. Works in combination with neamine transaminase to replace the 6-hydroxy group of paromamine with an amino group. Also able to collaborate with neomycin C transaminase to replace the 6'''-hydroxy group of 6'''-hydroxyneomycin C with an amino group. The sequence is that of Paromamine 6'-oxidase (neoG) from Streptomyces fradiae (Streptomyces roseoflavus).